A 347-amino-acid polypeptide reads, in one-letter code: MVRISLDVMGGDYGPEVVIPGAARALERHPDIKFVLFGQEARCTELLAKHPKLQASSTFHDCEIAVGMDEKPSQALRRGRGKSSMWKAIDAINAHEADVVVSAGNTGALMAMSVFCLRTMQGIQRPAIAAIWPTLKGESIVLDVGATIGADAQQLMDFALMGGAMARALFEVERPSVGLLNVGVEEIKGQEEVKEAGRLIREADIEGIEYYGFVEGDDIGRGTVDVVVTEGFSGNIALKAAEGTARQIAEYLRAAMSRTLLAKIGYIFAKSAFDRLREKMDPRKVNGGVFLGLNGIVIKSHGGADAEGFAAAIDVGYDMVKNGLKAKIEADLARYHGAQASEALPRA.

Belongs to the PlsX family. Homodimer. Probably interacts with PlsY.

It localises to the cytoplasm. The catalysed reaction is a fatty acyl-[ACP] + phosphate = an acyl phosphate + holo-[ACP]. The protein operates within lipid metabolism; phospholipid metabolism. Functionally, catalyzes the reversible formation of acyl-phosphate (acyl-PO(4)) from acyl-[acyl-carrier-protein] (acyl-ACP). This enzyme utilizes acyl-ACP as fatty acyl donor, but not acyl-CoA. This is Phosphate acyltransferase from Sinorhizobium medicae (strain WSM419) (Ensifer medicae).